Consider the following 164-residue polypeptide: ATP synthase subunit b 1 (164 aa).

The helical transmembrane segment at 8-28 threads the bilayer; that stretch reads AETWVAVGFAILMVVFVYFGV.

Belongs to the ATPase B chain family. As to quaternary structure, F-type ATPases have 2 components, F(1) - the catalytic core - and F(0) - the membrane proton channel. F(1) has five subunits: alpha(3), beta(3), gamma(1), delta(1), epsilon(1). F(0) has three main subunits: a(1), b(2) and c(10-14). The alpha and beta chains form an alternating ring which encloses part of the gamma chain. F(1) is attached to F(0) by a central stalk formed by the gamma and epsilon chains, while a peripheral stalk is formed by the delta and b chains.

The protein resides in the cell inner membrane. In terms of biological role, f(1)F(0) ATP synthase produces ATP from ADP in the presence of a proton or sodium gradient. F-type ATPases consist of two structural domains, F(1) containing the extramembraneous catalytic core and F(0) containing the membrane proton channel, linked together by a central stalk and a peripheral stalk. During catalysis, ATP synthesis in the catalytic domain of F(1) is coupled via a rotary mechanism of the central stalk subunits to proton translocation. Its function is as follows. Component of the F(0) channel, it forms part of the peripheral stalk, linking F(1) to F(0). The polypeptide is ATP synthase subunit b 1 (Rhodopseudomonas palustris (strain BisA53)).